The sequence spans 395 residues: uncharacterized protein (395 aa).

7 helical membrane passes run 42–62 (LKYVLVYLLSIINAFLLLIFI), 67–87 (LYSFGISSLTQGFARLVFVLL), 97–117 (LIFNILYWLLYVFINIPLIIF), 128–148 (ILSTHFVVASNVFGFLISIIP), 196–216 (FIYAAIYGFYNGISVSLLYIL), 241–261 (ILFYVNSFILIIAILIGSFVA), and 281–301 (LFFSPNLIATFFSILLTGTVV).

It localises to the cell membrane. This is an uncharacterized protein from Mycoplasma genitalium (strain ATCC 33530 / DSM 19775 / NCTC 10195 / G37) (Mycoplasmoides genitalium).